The following is a 613-amino-acid chain: Dihydroxy-acid dehydratase (613 aa).

Asp81 is a Mg(2+) binding site. Cys122 serves as a coordination point for [2Fe-2S] cluster. The Mg(2+) site is built by Asp123 and Lys124. At Lys124 the chain carries N6-carboxylysine. Cys193 lines the [2Fe-2S] cluster pocket. Glu489 is a binding site for Mg(2+). The active-site Proton acceptor is the Ser515.

It belongs to the IlvD/Edd family. As to quaternary structure, homodimer. The cofactor is [2Fe-2S] cluster. Mg(2+) serves as cofactor.

The enzyme catalyses (2R)-2,3-dihydroxy-3-methylbutanoate = 3-methyl-2-oxobutanoate + H2O. It catalyses the reaction (2R,3R)-2,3-dihydroxy-3-methylpentanoate = (S)-3-methyl-2-oxopentanoate + H2O. The protein operates within amino-acid biosynthesis; L-isoleucine biosynthesis; L-isoleucine from 2-oxobutanoate: step 3/4. It functions in the pathway amino-acid biosynthesis; L-valine biosynthesis; L-valine from pyruvate: step 3/4. Functions in the biosynthesis of branched-chain amino acids. Catalyzes the dehydration of (2R,3R)-2,3-dihydroxy-3-methylpentanoate (2,3-dihydroxy-3-methylvalerate) into 2-oxo-3-methylpentanoate (2-oxo-3-methylvalerate) and of (2R)-2,3-dihydroxy-3-methylbutanoate (2,3-dihydroxyisovalerate) into 2-oxo-3-methylbutanoate (2-oxoisovalerate), the penultimate precursor to L-isoleucine and L-valine, respectively. This chain is Dihydroxy-acid dehydratase, found in Pseudomonas fluorescens (strain ATCC BAA-477 / NRRL B-23932 / Pf-5).